Here is a 205-residue protein sequence, read N- to C-terminus: Photosystem I assembly protein Ycf4 (205 aa).

Helical transmembrane passes span 23–43 (WATV…SSYI) and 86–106 (LMCF…CLIF).

This sequence belongs to the Ycf4 family.

It is found in the plastid. The protein resides in the chloroplast thylakoid membrane. Functionally, seems to be required for the assembly of the photosystem I complex. This is Photosystem I assembly protein Ycf4 from Tetradesmus obliquus (Green alga).